The sequence spans 236 residues: Transcriptional activator protein SolR (236 aa).

Residues Val-169–Gly-234 enclose the HTH luxR-type domain. Residues Ala-193 to Asn-212 constitute a DNA-binding region (H-T-H motif).

This sequence belongs to the autoinducer-regulated transcriptional regulatory protein family.

This chain is Transcriptional activator protein SolR (solR), found in Ralstonia nicotianae (strain ATCC BAA-1114 / GMI1000) (Ralstonia solanacearum).